Consider the following 187-residue polypeptide: UPF0232 protein MUL_0004 (187 aa).

Over residues 1-12 the composition is skewed to gly residues; it reads MNGDGEQPGPGD. 2 disordered regions span residues 1–77 and 166–187; these read MNGD…QPLG and ASPSWRKGPRHIAGRGPRDTYG. Basic and acidic residues predominate over residues 14-30; that stretch reads AARDELPSMDLVRRTLA. Low complexity predominate over residues 31–55; sequence EARAAARARGQDPGRGFAAGPAPRR.

The protein belongs to the UPF0232 family.

The chain is UPF0232 protein MUL_0004 from Mycobacterium ulcerans (strain Agy99).